The primary structure comprises 388 residues: Chorismate synthase (388 aa).

Positions 39 and 45 each coordinate NADP(+). Residues 130-132 (RSS), 251-252 (NA), Gly-296, 311-315 (KPIPT), and Arg-337 each bind FMN.

This sequence belongs to the chorismate synthase family. Homotetramer. FMNH2 serves as cofactor.

It carries out the reaction 5-O-(1-carboxyvinyl)-3-phosphoshikimate = chorismate + phosphate. The protein operates within metabolic intermediate biosynthesis; chorismate biosynthesis; chorismate from D-erythrose 4-phosphate and phosphoenolpyruvate: step 7/7. Catalyzes the anti-1,4-elimination of the C-3 phosphate and the C-6 proR hydrogen from 5-enolpyruvylshikimate-3-phosphate (EPSP) to yield chorismate, which is the branch point compound that serves as the starting substrate for the three terminal pathways of aromatic amino acid biosynthesis. This reaction introduces a second double bond into the aromatic ring system. The chain is Chorismate synthase from Streptococcus thermophilus (strain CNRZ 1066).